The primary structure comprises 298 residues: Tyrosine recombinase XerD (298 aa).

A Core-binding (CB) domain is found at 3–88; sequence TLEHPLIDRF…GLRGFYRYCL (86 aa). Residues 109–292 form the Tyr recombinase domain; sequence PLPKSLSEAD…ARARLQDLHA (184 aa). Residues Arg-149, Lys-173, His-244, Arg-247, and His-270 contribute to the active site. The active-site O-(3'-phospho-DNA)-tyrosine intermediate is the Tyr-279.

The protein belongs to the 'phage' integrase family. XerD subfamily. In terms of assembly, forms a cyclic heterotetrameric complex composed of two molecules of XerC and two molecules of XerD.

It localises to the cytoplasm. Site-specific tyrosine recombinase, which acts by catalyzing the cutting and rejoining of the recombining DNA molecules. The XerC-XerD complex is essential to convert dimers of the bacterial chromosome into monomers to permit their segregation at cell division. It also contributes to the segregational stability of plasmids. The chain is Tyrosine recombinase XerD from Pseudomonas aeruginosa (strain ATCC 15692 / DSM 22644 / CIP 104116 / JCM 14847 / LMG 12228 / 1C / PRS 101 / PAO1).